The following is a 283-amino-acid chain: Formamidopyrimidine-DNA glycosylase (283 aa).

The Schiff-base intermediate with DNA role is filled by P2. The active-site Proton donor is E3. Catalysis depends on K58, which acts as the Proton donor; for beta-elimination activity. Residues H100, R119, and R162 each coordinate DNA. An FPG-type zinc finger spans residues 247–283; it reads RVYGREGLPCVTPGCSGTVGRIVQSGRSSFHCPLCQR. Catalysis depends on R273, which acts as the Proton donor; for delta-elimination activity.

This sequence belongs to the FPG family. As to quaternary structure, monomer. Zn(2+) serves as cofactor.

The enzyme catalyses Hydrolysis of DNA containing ring-opened 7-methylguanine residues, releasing 2,6-diamino-4-hydroxy-5-(N-methyl)formamidopyrimidine.. The catalysed reaction is 2'-deoxyribonucleotide-(2'-deoxyribose 5'-phosphate)-2'-deoxyribonucleotide-DNA = a 3'-end 2'-deoxyribonucleotide-(2,3-dehydro-2,3-deoxyribose 5'-phosphate)-DNA + a 5'-end 5'-phospho-2'-deoxyribonucleoside-DNA + H(+). Functionally, involved in base excision repair of DNA damaged by oxidation or by mutagenic agents. Acts as a DNA glycosylase that recognizes and removes damaged bases. Has a preference for oxidized purines, such as 7,8-dihydro-8-oxoguanine (8-oxoG). Has AP (apurinic/apyrimidinic) lyase activity and introduces nicks in the DNA strand. Cleaves the DNA backbone by beta-delta elimination to generate a single-strand break at the site of the removed base with both 3'- and 5'-phosphates. In Cereibacter sphaeroides (strain ATCC 17029 / ATH 2.4.9) (Rhodobacter sphaeroides), this protein is Formamidopyrimidine-DNA glycosylase.